A 612-amino-acid chain; its full sequence is Threonine--tRNA ligase (612 aa).

Residues 218-509 (DHRKLGVELG…LSEHFGGNFP (292 aa)) form a catalytic region. Zn(2+)-binding residues include C310, H361, and H486.

Belongs to the class-II aminoacyl-tRNA synthetase family. In terms of assembly, homodimer. Zn(2+) serves as cofactor.

It is found in the cytoplasm. The catalysed reaction is tRNA(Thr) + L-threonine + ATP = L-threonyl-tRNA(Thr) + AMP + diphosphate + H(+). Functionally, catalyzes the attachment of threonine to tRNA(Thr) in a two-step reaction: L-threonine is first activated by ATP to form Thr-AMP and then transferred to the acceptor end of tRNA(Thr). Also edits incorrectly charged L-seryl-tRNA(Thr). The polypeptide is Threonine--tRNA ligase (Helicobacter pylori (strain J99 / ATCC 700824) (Campylobacter pylori J99)).